The sequence spans 390 residues: Lissencephaly-1 homolog (390 aa).

Positions 7-39 (QREEINRAVAEYLQNNGYSEAFNMLLKEASLSE) constitute a LisH domain. The stretch at 54-80 (TTVLRLQRKVNDLEAKLLESQQEINHG) forms a coiled coil. WD repeat units follow at residues 104 to 145 (GHRL…KTLK), 146 to 185 (GHTD…DCLK), 189 to 228 (GHEH…CVFT), 231 to 270 (GHND…RNWY), 272 to 313 (EIMS…VIFT), 316 to 355 (AHEN…CMKA), and 358 to 390 (AHEH…WECR).

This sequence belongs to the WD repeat LIS1/nudF family.

It localises to the cytoplasm. The protein resides in the cytoskeleton. Its subcellular location is the microtubule organizing center. It is found in the centrosome. Positively regulates the activity of the minus-end directed microtubule motor protein dynein. May enhance dynein-mediated microtubule sliding by targeting dynein to the microtubule plus end. Required for several dynein- and microtubule-dependent processes. The polypeptide is Lissencephaly-1 homolog (Caenorhabditis briggsae).